We begin with the raw amino-acid sequence, 366 residues long: NADH-quinone oxidoreductase subunit D (366 aa).

The protein belongs to the complex I 49 kDa subunit family. NDH-1 is composed of 14 different subunits. Subunits NuoB, C, D, E, F, and G constitute the peripheral sector of the complex.

It is found in the cell membrane. It catalyses the reaction a quinone + NADH + 5 H(+)(in) = a quinol + NAD(+) + 4 H(+)(out). Its function is as follows. NDH-1 shuttles electrons from NADH, via FMN and iron-sulfur (Fe-S) centers, to quinones in the respiratory chain. The immediate electron acceptor for the enzyme in this species is believed to be a menaquinone. Couples the redox reaction to proton translocation (for every two electrons transferred, four hydrogen ions are translocated across the cytoplasmic membrane), and thus conserves the redox energy in a proton gradient. The protein is NADH-quinone oxidoreductase subunit D of Bacillus cereus (strain ATCC 14579 / DSM 31 / CCUG 7414 / JCM 2152 / NBRC 15305 / NCIMB 9373 / NCTC 2599 / NRRL B-3711).